A 198-amino-acid polypeptide reads, in one-letter code: FMN-dependent NADH:quinone oxidoreductase 6 (198 aa).

Met96–Phe99 contacts FMN.

The protein belongs to the azoreductase type 1 family. As to quaternary structure, homodimer. The cofactor is FMN.

The enzyme catalyses 2 a quinone + NADH + H(+) = 2 a 1,4-benzosemiquinone + NAD(+). It catalyses the reaction N,N-dimethyl-1,4-phenylenediamine + anthranilate + 2 NAD(+) = 2-(4-dimethylaminophenyl)diazenylbenzoate + 2 NADH + 2 H(+). Its function is as follows. Quinone reductase that provides resistance to thiol-specific stress caused by electrophilic quinones. In terms of biological role, also exhibits azoreductase activity. Catalyzes the reductive cleavage of the azo bond in aromatic azo compounds to the corresponding amines. The sequence is that of FMN-dependent NADH:quinone oxidoreductase 6 from Burkholderia lata (strain ATCC 17760 / DSM 23089 / LMG 22485 / NCIMB 9086 / R18194 / 383).